The sequence spans 198 residues: Probable chemoreceptor glutamine deamidase CheD (198 aa).

It belongs to the CheD family.

It catalyses the reaction L-glutaminyl-[protein] + H2O = L-glutamyl-[protein] + NH4(+). In terms of biological role, probably deamidates glutamine residues to glutamate on methyl-accepting chemotaxis receptors (MCPs), playing an important role in chemotaxis. The sequence is that of Probable chemoreceptor glutamine deamidase CheD from Xanthomonas campestris pv. campestris (strain 8004).